We begin with the raw amino-acid sequence, 257 residues long: Nickel import system ATP-binding protein NikD (257 aa).

Positions isoleucine 4 to isoleucine 245 constitute an ABC transporter domain. Glycine 37–serine 44 provides a ligand contact to ATP.

It belongs to the ABC transporter superfamily. The complex is composed of two ATP-binding proteins (NikD and NikE), two transmembrane proteins (NikB and NikC) and a solute-binding protein (NikA).

The protein localises to the cell membrane. The catalysed reaction is Ni(2+)(out) + ATP + H2O = Ni(2+)(in) + ADP + phosphate + H(+). Part of the ABC transporter complex NikABCDE (Opp2) involved in nickel import. Probably responsible for energy coupling to the transport system. The chain is Nickel import system ATP-binding protein NikD from Staphylococcus aureus (strain bovine RF122 / ET3-1).